Reading from the N-terminus, the 142-residue chain is Probable pilin MJ0832.1 (142 aa).

Positions 1–8 (MLKFRKRG) are excised as a propeptide. A QXSXEXXXL motif is present at residues 9 to 17 (QISLEFSLL).

In terms of processing, the N-terminus is cleaved by the prepilin peptidase EppA, which recognizes the class III signal sequence.

It localises to the secreted. Its subcellular location is the cell surface. The protein localises to the fimbrium. In Methanocaldococcus jannaschii (strain ATCC 43067 / DSM 2661 / JAL-1 / JCM 10045 / NBRC 100440) (Methanococcus jannaschii), this protein is Probable pilin MJ0832.1.